The sequence spans 362 residues: NAD(P)H-quinone oxidoreductase subunit 1, chloroplastic (362 aa).

A run of 8 helical transmembrane segments spans residues 27–47, 103–123, 128–148, 164–184, 202–222, 247–267, 303–323, and 342–362; these read IWILPILALLLGITIEVLVIV, IAVISILLSFLVIPLGYHFVL, IGVFLWIAISSIAPIGLLMAG, AAQSISYEIPLTFCVLAISLL, FFGWNLWRQPIGFLVFLISSL, YSGIKYGLFYLVSYLNLLVSS, VIGIFITLTKAYLFLFISITI, and FLLPISLGNLLLTTSFQLVSL.

It belongs to the complex I subunit 1 family. NDH is composed of at least 16 different subunits, 5 of which are encoded in the nucleus.

It is found in the plastid. The protein localises to the chloroplast thylakoid membrane. It carries out the reaction a plastoquinone + NADH + (n+1) H(+)(in) = a plastoquinol + NAD(+) + n H(+)(out). The enzyme catalyses a plastoquinone + NADPH + (n+1) H(+)(in) = a plastoquinol + NADP(+) + n H(+)(out). Functionally, NDH shuttles electrons from NAD(P)H:plastoquinone, via FMN and iron-sulfur (Fe-S) centers, to quinones in the photosynthetic chain and possibly in a chloroplast respiratory chain. The immediate electron acceptor for the enzyme in this species is believed to be plastoquinone. Couples the redox reaction to proton translocation, and thus conserves the redox energy in a proton gradient. The protein is NAD(P)H-quinone oxidoreductase subunit 1, chloroplastic of Saccharum hybrid (Sugarcane).